The following is a 133-amino-acid chain: Small ribosomal subunit protein uS8 (133 aa).

This sequence belongs to the universal ribosomal protein uS8 family. Part of the 30S ribosomal subunit. Contacts proteins S5 and S12.

In terms of biological role, one of the primary rRNA binding proteins, it binds directly to 16S rRNA central domain where it helps coordinate assembly of the platform of the 30S subunit. This chain is Small ribosomal subunit protein uS8, found in Synechocystis sp. (strain ATCC 27184 / PCC 6803 / Kazusa).